Reading from the N-terminus, the 561-residue chain is Potassium-transporting ATPase potassium-binding subunit (561 aa).

10 consecutive transmembrane segments (helical) span residues 4-24 (IIMQ…PLGI), 65-85 (AGSV…VLML), 134-154 (GLTV…FAVI), 177-197 (LYIL…QGVV), 253-273 (FTNL…VVMF), 285-305 (AIMT…TISE), 380-400 (GLYG…LLVG), 417-437 (MVCL…AFAV), 484-504 (MVGA…ALYL), and 528-548 (FIGL…LPAL).

The protein belongs to the KdpA family. In terms of assembly, the system is composed of three essential subunits: KdpA, KdpB and KdpC.

It is found in the cell membrane. Its function is as follows. Part of the high-affinity ATP-driven potassium transport (or Kdp) system, which catalyzes the hydrolysis of ATP coupled with the electrogenic transport of potassium into the cytoplasm. This subunit binds the extracellular potassium ions and delivers the ions to the membrane domain of KdpB through an intramembrane tunnel. This Listeria welshimeri serovar 6b (strain ATCC 35897 / DSM 20650 / CCUG 15529 / CIP 8149 / NCTC 11857 / SLCC 5334 / V8) protein is Potassium-transporting ATPase potassium-binding subunit.